Reading from the N-terminus, the 473-residue chain is GTPase Der (473 aa).

2 EngA-type G domains span residues 3–167 (LTIA…GKDK) and 204–379 (IRIA…RIWN). GTP-binding positions include 9 to 16 (GRPNVGKS), 56 to 60 (DTAGL), 119 to 122 (NKSE), 210 to 217 (GRPNTGKS), 257 to 261 (DTAGL), and 322 to 325 (NKWD). The region spanning 380 to 464 (RRISTGKLNR…PIRLSLRTSD (85 aa)) is the KH-like domain.

Belongs to the TRAFAC class TrmE-Era-EngA-EngB-Septin-like GTPase superfamily. EngA (Der) GTPase family. As to quaternary structure, associates with the 50S ribosomal subunit.

Its function is as follows. GTPase that plays an essential role in the late steps of ribosome biogenesis. The protein is GTPase Der of Bartonella bacilliformis (strain ATCC 35685 / KC583 / Herrer 020/F12,63).